A 101-amino-acid polypeptide reads, in one-letter code: Small ribosomal subunit protein uS14 (101 aa).

This sequence belongs to the universal ribosomal protein uS14 family. Part of the 30S ribosomal subunit. Contacts proteins S3 and S10.

Binds 16S rRNA, required for the assembly of 30S particles and may also be responsible for determining the conformation of the 16S rRNA at the A site. The chain is Small ribosomal subunit protein uS14 from Bordetella parapertussis (strain 12822 / ATCC BAA-587 / NCTC 13253).